The chain runs to 524 residues: MWVTNTVLLYRPNSMNRLTFSYPTRLAHSRKASSFSRFFRSSKRKKRVTTLSTKKPDDDHEISPVPPEKFSADLGWLSAFPHVSVASMANFLFGYHIGVMNGPIVSIARELGFEGNSILEGLVVSIFIAGAFIGSIVAGPLVDKFGYRRTFQIFTIPLILGALVSAQAHSLDEILCGRFLVGLGIGVNTVLVPIYISEVAPTKYRGSLGTLCQIGTCLGIIFSLLLGIPAEDDPHWWRTMLYVASMPGFLLALGMQFAVESPRWLCKVGRLDDAKVVIRNIWGGSEVEKAVEDFQSVMKNSGSNLNSRWLELLDKPHSRVAFIGGSLFVLQQFAGINGVLYFSSLTFQNVGITSGAQASLYVGVTNFAGALCASYLIDKQGRKKLLIGSYLGMAVSMFLIVYAVGFPLDEDLSQSLSILGTLMYIFSFAIGAGPVTGLIIPELSSNRTRGKIMGFSFSVHWVSNFLVGLFFLDLVEKYGVGTVYASFGSVSLLAAAFSHLFTVETKGRSLEEIELSLNSRDDLS.

Helical transmembrane passes span 88–108 (MANF…VSIA), 122–142 (LVVS…GPLV), 151–171 (FQIF…AHSL), 179–199 (FLVG…ISEV), 208–228 (LGTL…LLGI), 239–259 (TMLY…QFAV), 320–340 (VAFI…NGVL), 357–377 (QASL…SYLI), 386–406 (LIGS…AVGF), 420–440 (GTLM…GLII), 452–472 (IMGF…LFFL), and 483–503 (VYAS…LFTV).

It belongs to the major facilitator superfamily. Sugar transporter (TC 2.A.1.1) family.

Its subcellular location is the plastid. It is found in the chloroplast membrane. May be involved in the efflux of glucose towards the cytosol. This chain is Probable plastidic glucose transporter 1, found in Arabidopsis thaliana (Mouse-ear cress).